The primary structure comprises 468 residues: Glutamate--tRNA ligase (468 aa).

Positions 12 to 22 (PSPTGMMHIGT) match the 'HIGH' region motif. A 'KMSKS' region motif is present at residues 238 to 242 (KLSKR). K241 is an ATP binding site.

This sequence belongs to the class-I aminoacyl-tRNA synthetase family. Glutamate--tRNA ligase type 1 subfamily. Monomer.

Its subcellular location is the cytoplasm. It carries out the reaction tRNA(Glu) + L-glutamate + ATP = L-glutamyl-tRNA(Glu) + AMP + diphosphate. In terms of biological role, catalyzes the attachment of glutamate to tRNA(Glu) in a two-step reaction: glutamate is first activated by ATP to form Glu-AMP and then transferred to the acceptor end of tRNA(Glu). This is Glutamate--tRNA ligase from Phenylobacterium zucineum (strain HLK1).